Consider the following 62-residue polypeptide: Dual specificity mitogen-activated protein kinase kinase 3 (62 aa).

Positions 1–62 (GKIAVSIVKA…VAKTMDAGCK (62 aa)) constitute a Protein kinase domain.

The protein belongs to the protein kinase superfamily. STE Ser/Thr protein kinase family. MAP kinase kinase subfamily. Activated by phosphorylation on Ser/Thr catalyzed by MAP kinase kinase kinases.

The enzyme catalyses L-seryl-[protein] + ATP = O-phospho-L-seryl-[protein] + ADP + H(+). It carries out the reaction L-threonyl-[protein] + ATP = O-phospho-L-threonyl-[protein] + ADP + H(+). The catalysed reaction is L-tyrosyl-[protein] + ATP = O-phospho-L-tyrosyl-[protein] + ADP + H(+). Catalyzes the concomitant phosphorylation of a threonine and a tyrosine residue in a Thr-Glu-Tyr sequence located in MAP kinases. The polypeptide is Dual specificity mitogen-activated protein kinase kinase 3 (map2k3) (Xenopus laevis (African clawed frog)).